The sequence spans 357 residues: Prostaglandin D2 receptor (357 aa).

At 1–20 the chain is on the extracellular side; the sequence is MNESYRCQTSTWVERGSSAT. N-linked (GlcNAc...) asparagine glycosylation occurs at Asn-2. The chain crosses the membrane as a helical span at residues 21–41; the sequence is MGAVLFGAGLLGNLLALVLLA. At 42 to 58 the chain is on the cytoplasmic side; the sequence is RSGLGSCRPGPLHPPPS. The helical transmembrane segment at 59 to 79 threads the bilayer; it reads VFYVLVCGLTVTDLLGKCLIS. Residues 80–106 are Extracellular-facing; it reads PMVLAAYAQNQSLKELLPASGNQLCET. N-linked (GlcNAc...) asparagine glycosylation occurs at Asn-89. Cys-104 and Cys-182 are oxidised to a cystine. Residues 107–127 traverse the membrane as a helical segment; sequence FAFLMSFFGLASTLQLLAMAV. Residues 128 to 149 lie on the Cytoplasmic side of the membrane; the sequence is ECWLSLGHPFFYQRHVTLRRGV. The chain crosses the membrane as a helical span at residues 150-170; that stretch reads LVAPVVAAFCLAFCALPFAGF. Residues 171-194 lie on the Extracellular side of the membrane; it reads GKFVQYCPGTWCFIQMIHKERSFS. The helical transmembrane segment at 195–215 threads the bilayer; it reads VIGFSVLYSSLMALLVLATVV. Residues 216–261 are Cytoplasmic-facing; sequence CNLGAMYNLYDMHRRQRHYPHRCSRDRAQSGSDYRHGSLHPLEELD. A helical transmembrane segment spans residues 262-282; the sequence is HFVLLALMTVLFTMCSLPLIY. Over 283-306 the chain is Extracellular; that stretch reads RAYYGAFKLENKAEGDSEDLQALR. Residues 307-327 traverse the membrane as a helical segment; it reads FLSVISIVDPWIFIIFRTSVF. Residues 328–357 are Cytoplasmic-facing; sequence RMLFHKVFTRPLIYRNWSSHSQQSNVESTL.

The protein belongs to the G-protein coupled receptor 1 family. In terms of tissue distribution, most abundantly expressed in the ileum, followed by lung, stomach and uterus.

The protein resides in the cell membrane. Functionally, receptor for prostaglandin D2 (PGD2). The activity of this receptor is mainly mediated by G(s) proteins that stimulate adenylate cyclase, resulting in an elevation of intracellular cAMP. A mobilization of calcium is also observed, but without formation of inositol 1,4,5-trisphosphate. Involved in PLA2G3-dependent maturation of mast cells. PLA2G3 is secreted by immature mast cells and acts on nearby fibroblasts upstream to PTDGS to synthesize PGD2, which in turn promotes mast cell maturation and degranulation via PTGDR. The sequence is that of Prostaglandin D2 receptor (Ptgdr) from Mus musculus (Mouse).